The chain runs to 825 residues: Fibrous sheath CABYR-binding protein (825 aa).

2 disordered regions span residues 1–43 and 113–139; these read MVGK…SYSA and QDVE…RTGY. The segment covering 21–40 has biased composition (polar residues); that stretch reads KSSSPKATHRIGNTSGSKGS. S160 bears the Phosphoserine mark. 3 disordered regions span residues 168–232, 244–718, and 732–751; these read SRPD…LLED, QEGS…DKHS, and GEAS…EDEA. The segment covering 200–220 has biased composition (polar residues); that stretch reads PATNSNEEIGQKNISRTSFTQ. Residues 277–290 show a composition bias toward basic and acidic residues; that stretch reads ATAKAEPRPAEETH. Low complexity-rich tracts occupy residues 348 to 357 and 398 to 407; these read AEILPPSAEE and PLPAEGALEE. Residues 610–676 show a composition bias toward pro residues; it reads VQPPPAEEAP…PAEVQPPPAE (67 aa).

Interacts with CABYR. Interacts with ROPN1 and ROPN1L; the interaction increases upon spermatozoa capacitation conditions. Phosphorylated by PKA upon spermatozoa capacitation conditions.

Its subcellular location is the cell projection. The protein resides in the cilium. It is found in the flagellum. Functionally, may be involved in the later stages of fibrous sheath biogenesis and spermatozoa capacitation. Inhibits ROPN1 and ROPN1L SUMOylation. Binds calcium. In Homo sapiens (Human), this protein is Fibrous sheath CABYR-binding protein (FSCB).